Consider the following 236-residue polypeptide: Protein-L-isoaspartate O-methyltransferase 1 (236 aa).

Ser86 is an active-site residue.

Belongs to the methyltransferase superfamily. L-isoaspartyl/D-aspartyl protein methyltransferase family.

The protein localises to the cytoplasm. It carries out the reaction [protein]-L-isoaspartate + S-adenosyl-L-methionine = [protein]-L-isoaspartate alpha-methyl ester + S-adenosyl-L-homocysteine. In terms of biological role, catalyzes the methyl esterification of L-isoaspartyl residues in peptides and proteins that result from spontaneous decomposition of normal L-aspartyl and L-asparaginyl residues. It plays a role in the repair and/or degradation of damaged proteins. This chain is Protein-L-isoaspartate O-methyltransferase 1, found in Nitrosospira multiformis (strain ATCC 25196 / NCIMB 11849 / C 71).